The primary structure comprises 258 residues: Phosphate import ATP-binding protein PstB (258 aa).

Residues 12-253 (LEVKNLNFYY…PARKETEDYI (242 aa)) form the ABC transporter domain. 44–51 (GPSGCGKS) is an ATP binding site.

This sequence belongs to the ABC transporter superfamily. Phosphate importer (TC 3.A.1.7) family. The complex is composed of two ATP-binding proteins (PstB), two transmembrane proteins (PstC and PstA) and a solute-binding protein (PstS).

The protein localises to the cell inner membrane. It catalyses the reaction phosphate(out) + ATP + H2O = ADP + 2 phosphate(in) + H(+). In terms of biological role, part of the ABC transporter complex PstSACB involved in phosphate import. Responsible for energy coupling to the transport system. This Bordetella pertussis (strain Tohama I / ATCC BAA-589 / NCTC 13251) protein is Phosphate import ATP-binding protein PstB.